We begin with the raw amino-acid sequence, 78 residues long: MSRVCQLTGTRANNGMAVSHSHIRTKKLQQANLQQRRLWWAEGKRWINLRITTRALKTIQKKGLGAYARSLGINLAKL.

It belongs to the bacterial ribosomal protein bL28 family.

This chain is Large ribosomal subunit protein bL28, found in Synechococcus sp. (strain CC9311).